Reading from the N-terminus, the 589-residue chain is Aspartate--tRNA(Asp/Asn) ligase (589 aa).

Glutamate 176 provides a ligand contact to L-aspartate. The aspartate stretch occupies residues 200–203 (QLFK). Arginine 222 is an L-aspartate binding site. Residues 222–224 (RDE) and glutamine 231 contribute to the ATP site. Histidine 450 lines the L-aspartate pocket. ATP is bound at residue glutamate 484. Position 491 (arginine 491) interacts with L-aspartate. 536–539 (GLDR) contributes to the ATP binding site.

Belongs to the class-II aminoacyl-tRNA synthetase family. Type 1 subfamily. As to quaternary structure, homodimer.

The protein resides in the cytoplasm. The enzyme catalyses tRNA(Asx) + L-aspartate + ATP = L-aspartyl-tRNA(Asx) + AMP + diphosphate. Its function is as follows. Aspartyl-tRNA synthetase with relaxed tRNA specificity since it is able to aspartylate not only its cognate tRNA(Asp) but also tRNA(Asn). Reaction proceeds in two steps: L-aspartate is first activated by ATP to form Asp-AMP and then transferred to the acceptor end of tRNA(Asp/Asn). The chain is Aspartate--tRNA(Asp/Asn) ligase from Bacillus cytotoxicus (strain DSM 22905 / CIP 110041 / 391-98 / NVH 391-98).